The sequence spans 66 residues: Large ribosomal subunit protein bL33c (66 aa).

The protein belongs to the bacterial ribosomal protein bL33 family.

The protein resides in the plastid. The protein localises to the chloroplast. This chain is Large ribosomal subunit protein bL33c, found in Agrostis stolonifera (Creeping bentgrass).